Here is a 549-residue protein sequence, read N- to C-terminus: Indole-3-acetic acid-amido synthetase GH3.2 (549 aa).

It belongs to the IAA-amido conjugating enzyme family. In terms of tissue distribution, expressed in flowers, pollen, cotyledons, stipules, true leaves, hypocotyls, and all parts of the roots except for the primary root tips.

Its function is as follows. Catalyzes the synthesis of indole-3-acetic acid (IAA)-amino acid conjugates, providing a mechanism for the plant to cope with the presence of excess auxin. Strongly reactive with Glu, Gln, Trp, Asp, Ala, Leu, Phe, Gly, Tyr, Met, Ile and Val. Little or no product formation with His, Ser, Thr, Arg, Lys, or Cys. Also active on pyruvic and butyric acid analogs of IAA, PAA and the synthetic auxin naphthaleneacetic acid (NAA). The two chlorinated synthetic auxin herbicides 2,4-D and 3,6-dichloro-o-anisic acid (dicamba) cannot be used as substrates. This chain is Indole-3-acetic acid-amido synthetase GH3.2 (GH3.2), found in Arabidopsis thaliana (Mouse-ear cress).